The following is a 169-amino-acid chain: Glutathione peroxidase (169 aa).

U43 is a catalytic residue. Residue U43 is a non-standard amino acid, selenocysteine.

This sequence belongs to the glutathione peroxidase family.

It carries out the reaction 2 glutathione + H2O2 = glutathione disulfide + 2 H2O. In Schistosoma mansoni (Blood fluke), this protein is Glutathione peroxidase (GPX1).